Here is a 222-residue protein sequence, read N- to C-terminus: Countin-3 (222 aa).

A signal peptide spans 1–20 (MNKILSLFLITILLISKVMS). The Saposin B-type domain occupies 21-105 (SSEECKLCTD…ESVKMCQYND (85 aa)). Disulfide bonds link cysteine 25/cysteine 101, cysteine 28/cysteine 95, and cysteine 56/cysteine 68. Residues asparagine 108, asparagine 134, and asparagine 218 are each glycosylated (N-linked (GlcNAc...) asparagine).

The protein belongs to the countin family.

Its subcellular location is the secreted. Its function is as follows. May control the size of the multicellular structure. In Dictyostelium discoideum (Social amoeba), this protein is Countin-3 (ctnC).